We begin with the raw amino-acid sequence, 50 residues long: MQDLKTYLSTAPVLAILCCSFLAGLVIEINRFFPDALTLTFPSFEFFSSP.

A helical transmembrane segment spans residues 7–27 (YLSTAPVLAILCCSFLAGLVI).

This sequence belongs to the PsaJ family.

It localises to the plastid. The protein resides in the chloroplast thylakoid membrane. Functionally, may help in the organization of the PsaE and PsaF subunits. This is Photosystem I reaction center subunit IX from Pinus koraiensis (Korean pine).